The following is a 146-amino-acid chain: Hemoglobin subunit beta (146 aa).

V1 is subject to N-acetylvaline. A Globin domain is found at 2–146 (HLTDAEKAAI…VASALAHKYH (145 aa)). H63 provides a ligand contact to heme b. Residue K82 is modified to N6-acetyllysine. Position 92 (H92) interacts with heme b. C93 is subject to S-nitrosocysteine. K144 bears the N6-acetyllysine mark.

It belongs to the globin family. In terms of assembly, heterotetramer of two alpha chains and two beta chains. In terms of tissue distribution, red blood cells.

In terms of biological role, involved in oxygen transport from the lung to the various peripheral tissues. The protein is Hemoglobin subunit beta (HBB) of Microtus xanthognathus (Yellow-cheeked vole).